We begin with the raw amino-acid sequence, 396 residues long: Elongation factor Tu (396 aa).

The tr-type G domain occupies Lys-11–Glu-205. The interval Gly-20 to Thr-27 is G1. Gly-20–Thr-27 provides a ligand contact to GTP. Thr-27 lines the Mg(2+) pocket. Residues Gly-61 to Asn-65 form a G2 region. Positions Asp-82–Gly-85 are G3. GTP contacts are provided by residues Asp-82 to His-86 and Asn-137 to Asp-140. Residues Asn-137 to Asp-140 form a G4 region. The segment at Ser-175–Leu-177 is G5.

It belongs to the TRAFAC class translation factor GTPase superfamily. Classic translation factor GTPase family. EF-Tu/EF-1A subfamily. Monomer.

The protein resides in the cytoplasm. It catalyses the reaction GTP + H2O = GDP + phosphate + H(+). In terms of biological role, GTP hydrolase that promotes the GTP-dependent binding of aminoacyl-tRNA to the A-site of ribosomes during protein biosynthesis. This Lactobacillus gasseri (strain ATCC 33323 / DSM 20243 / BCRC 14619 / CIP 102991 / JCM 1131 / KCTC 3163 / NCIMB 11718 / NCTC 13722 / AM63) protein is Elongation factor Tu.